The sequence spans 300 residues: DDRGK domain-containing protein 1 (300 aa).

The Lumenal portion of the chain corresponds to 1–2; the sequence is MD. A helical membrane pass occupies residues 3 to 23; sequence VVLYIAAAAILLVLIVFSVKI. Topologically, residues 24–300 are cytoplasmic; that stretch reads RGRTQDADVE…NLTPDIHSSA (277 aa). The interval 28–173 is disordered; it reads QDADVEDHQN…RVKEEQERRE (146 aa). Acidic residues predominate over residues 78 to 90; it reads NEDSPVEADEDEE. The segment covering 112–173 has biased composition (basic and acidic residues); that stretch reads KLEEKQARKA…RVKEEQERRE (62 aa). A UFM1-interacting motif (UFIM) motif is present at residues 183–197; the sequence is SFIIEDQGEAEELTE. The region spanning 217–261 is the PCI domain; that stretch reads VLLEDLASQFGLRTQDAIARLQDLIADGSLTGVIDDRGKFIFITP.

The protein belongs to the DDRGK1 family. As to quaternary structure, component of the UFM1 ribosome E3 ligase (UREL) complex, composed of ufl1, ddrgk1 and cdk5rap3.

The protein localises to the endoplasmic reticulum membrane. Its function is as follows. Component of the UFM1 ribosome E3 ligase (UREL) complex, a multiprotein complex that catalyzes ufmylation of endoplasmic reticulum-docked proteins. The UREL complex plays a key role in ribosome recycling by mediating mono-ufmylation of the RPL26/uL24 subunit of the 60S ribosome following ribosome dissociation: ufmylation weakens the junction between post-termination 60S subunits and SEC61 translocons, promoting release and recycling of the large ribosomal subunit from the endoplasmic reticulum membrane. Ufmylation of RPL26/uL24 and subsequent 60S ribosome recycling either take place after normal termination of translation or after ribosome stalling during cotranslational translocation at the endoplasmic reticulum. Within the UREL complex, DDRGK1 tethers the complex to the endoplasmic reticulum membrane to restrict its activity to endoplasmic reticulum-docked ribosomes and acts as an ufmylation 'reader': following RPL26/uL24 ufmylation, DDRGK1 specifically binds to ufmylated RPL26/uL24 via its UFIM motif, resulting in stable association between the 60S ribosome and the UREL complex, followed by dissociation of the 60S ribosome subunit from the endoplasmic reticulum membrane. The UREL complex is also involved in reticulophagy in response to endoplasmic reticulum stress by promoting ufmylation of proteins such as CYB5R3 and RPN1, thereby promoting lysosomal degradation of ufmylated proteins. Plays a role in cartilage development through sox9, inhibiting the ubiquitin-mediated proteasomal degradation of this transcriptional regulator. Required for stabilization and ufmylation of ATG9A. This Danio rerio (Zebrafish) protein is DDRGK domain-containing protein 1.